Reading from the N-terminus, the 557-residue chain is Dihydroxy-acid dehydratase (557 aa).

A [2Fe-2S] cluster-binding site is contributed by C50. Mg(2+) is bound at residue D82. [2Fe-2S] cluster is bound at residue C123. D124 and K125 together coordinate Mg(2+). K125 carries the post-translational modification N6-carboxylysine. C195 provides a ligand contact to [2Fe-2S] cluster. Residue E447 coordinates Mg(2+). The active-site Proton acceptor is the S473.

The protein belongs to the IlvD/Edd family. As to quaternary structure, homodimer. [2Fe-2S] cluster serves as cofactor. The cofactor is Mg(2+).

The enzyme catalyses (2R)-2,3-dihydroxy-3-methylbutanoate = 3-methyl-2-oxobutanoate + H2O. It catalyses the reaction (2R,3R)-2,3-dihydroxy-3-methylpentanoate = (S)-3-methyl-2-oxopentanoate + H2O. It functions in the pathway amino-acid biosynthesis; L-isoleucine biosynthesis; L-isoleucine from 2-oxobutanoate: step 3/4. It participates in amino-acid biosynthesis; L-valine biosynthesis; L-valine from pyruvate: step 3/4. Functions in the biosynthesis of branched-chain amino acids. Catalyzes the dehydration of (2R,3R)-2,3-dihydroxy-3-methylpentanoate (2,3-dihydroxy-3-methylvalerate) into 2-oxo-3-methylpentanoate (2-oxo-3-methylvalerate) and of (2R)-2,3-dihydroxy-3-methylbutanoate (2,3-dihydroxyisovalerate) into 2-oxo-3-methylbutanoate (2-oxoisovalerate), the penultimate precursor to L-isoleucine and L-valine, respectively. This is Dihydroxy-acid dehydratase from Ralstonia nicotianae (strain ATCC BAA-1114 / GMI1000) (Ralstonia solanacearum).